The sequence spans 466 residues: Cysteine--tRNA ligase (466 aa).

C28 is a Zn(2+) binding site. The short motif at 30–40 (PTVYNYIHIGN) is the 'HIGH' region element. Zn(2+) is bound by residues C208, H233, and E237. Residues 265–269 (KMSKS) carry the 'KMSKS' region motif. Residue K268 participates in ATP binding.

Belongs to the class-I aminoacyl-tRNA synthetase family. Monomer. Zn(2+) is required as a cofactor.

The protein localises to the cytoplasm. It carries out the reaction tRNA(Cys) + L-cysteine + ATP = L-cysteinyl-tRNA(Cys) + AMP + diphosphate. In Staphylococcus aureus (strain bovine RF122 / ET3-1), this protein is Cysteine--tRNA ligase.